The primary structure comprises 475 residues: Argininosuccinate lyase 1 (475 aa).

The protein belongs to the lyase 1 family. Argininosuccinate lyase subfamily.

It localises to the cytoplasm. The enzyme catalyses 2-(N(omega)-L-arginino)succinate = fumarate + L-arginine. It functions in the pathway amino-acid biosynthesis; L-arginine biosynthesis; L-arginine from L-ornithine and carbamoyl phosphate: step 3/3. The protein is Argininosuccinate lyase 1 of Pseudomonas fluorescens (strain Pf0-1).